The following is a 227-amino-acid chain: tRNA (guanine-N(1)-)-methyltransferase (227 aa).

Residues Gly-110 and 129–134 (IGDYVL) contribute to the S-adenosyl-L-methionine site.

This sequence belongs to the RNA methyltransferase TrmD family. Homodimer.

The protein resides in the cytoplasm. The catalysed reaction is guanosine(37) in tRNA + S-adenosyl-L-methionine = N(1)-methylguanosine(37) in tRNA + S-adenosyl-L-homocysteine + H(+). In terms of biological role, specifically methylates guanosine-37 in various tRNAs. The polypeptide is tRNA (guanine-N(1)-)-methyltransferase (Mycoplasmopsis agalactiae (strain NCTC 10123 / CIP 59.7 / PG2) (Mycoplasma agalactiae)).